Reading from the N-terminus, the 96-residue chain is Complement inhibitor RaCI4 (96 aa).

Residues 1-24 (MSAFNIFALVVVVCALMINECCTS) form the signal peptide. 3 disulfide bridges follow: Cys37/Cys61, Cys42/Cys63, and Cys57/Cys78.

It belongs to the RaCI family. In terms of tissue distribution, expressed in salivary glands.

The protein resides in the secreted. Its function is as follows. Complement inhibitor. Prevents complement-mediated C5 activation by binding to C5. Binds C5 at a different binding site than the other tick complement inhibitors OmCI and CirpT1, and the drug eculizumab. Inhibits complement in human and guinea pig but not in other species tested (rabbit, rat, mouse, and pig). The chain is Complement inhibitor RaCI4 from Hyalomma rufipes (Tick).